The following is a 162-amino-acid chain: Cyanate hydratase (162 aa).

Residues Arg102, Glu105, and Ser128 contribute to the active site.

The protein belongs to the cyanase family.

It carries out the reaction cyanate + hydrogencarbonate + 3 H(+) = NH4(+) + 2 CO2. In terms of biological role, catalyzes the reaction of cyanate with bicarbonate to produce ammonia and carbon dioxide. The polypeptide is Cyanate hydratase (Mycosarcoma maydis (Corn smut fungus)).